Here is a 411-residue protein sequence, read N- to C-terminus: Serine/threonine transporter SstT (411 aa).

Helical transmembrane passes span 14–34 (GSLV…ASVA), 43–63 (FLGG…VFIL), 82–102 (IIML…VMSF), 141–161 (ALMS…GFAL), 192–212 (IGIF…ALAG), 218–238 (AVLL…IVFF), 290–310 (IPLG…VLTL), 330–350 (VVAA…LLLI), and 357–377 (FGIP…IGVI).

The protein belongs to the dicarboxylate/amino acid:cation symporter (DAACS) (TC 2.A.23) family.

It is found in the cell inner membrane. The enzyme catalyses L-serine(in) + Na(+)(in) = L-serine(out) + Na(+)(out). It carries out the reaction L-threonine(in) + Na(+)(in) = L-threonine(out) + Na(+)(out). Functionally, involved in the import of serine and threonine into the cell, with the concomitant import of sodium (symport system). In Photobacterium profundum (strain SS9), this protein is Serine/threonine transporter SstT.